The following is a 180-amino-acid chain: Large ribosomal subunit protein uL6 (180 aa).

Belongs to the universal ribosomal protein uL6 family. Part of the 50S ribosomal subunit.

Its function is as follows. This protein binds to the 23S rRNA, and is important in its secondary structure. It is located near the subunit interface in the base of the L7/L12 stalk, and near the tRNA binding site of the peptidyltransferase center. This chain is Large ribosomal subunit protein uL6, found in Dictyoglomus thermophilum (strain ATCC 35947 / DSM 3960 / H-6-12).